The sequence spans 89 residues: Protein WFDC9 (89 aa).

The N-terminal stretch at 1–23 (MKPWILLLVMFISGVVMLLPVLG) is a signal peptide.

It localises to the secreted. This Homo sapiens (Human) protein is Protein WFDC9 (WFDC9).